The chain runs to 118 residues: Large ribosomal subunit protein bL19 (118 aa).

This sequence belongs to the bacterial ribosomal protein bL19 family.

In terms of biological role, this protein is located at the 30S-50S ribosomal subunit interface and may play a role in the structure and function of the aminoacyl-tRNA binding site. The protein is Large ribosomal subunit protein bL19 of Saccharophagus degradans (strain 2-40 / ATCC 43961 / DSM 17024).